Here is a 126-residue protein sequence, read N- to C-terminus: Large ribosomal subunit protein bL20c (126 aa).

It belongs to the bacterial ribosomal protein bL20 family.

The protein resides in the plastid. It is found in the chloroplast. Functionally, binds directly to 23S ribosomal RNA and is necessary for the in vitro assembly process of the 50S ribosomal subunit. It is not involved in the protein synthesizing functions of that subunit. This is Large ribosomal subunit protein bL20c from Guizotia abyssinica (Niger).